A 190-amino-acid chain; its full sequence is RNA pyrophosphohydrolase (190 aa).

The region spanning 6 to 149 (GYRPNVGIIL…KRDVYTQALN (144 aa)) is the Nudix hydrolase domain. The short motif at 38–59 (GGIKYGESPVQAMYRELHEEVG) is the Nudix box element. Residues 167 to 190 (QRVHGPRSTDSPSSETDGHAHIAG) form a disordered region.

Belongs to the Nudix hydrolase family. RppH subfamily. Requires a divalent metal cation as cofactor.

In terms of biological role, accelerates the degradation of transcripts by removing pyrophosphate from the 5'-end of triphosphorylated RNA, leading to a more labile monophosphorylated state that can stimulate subsequent ribonuclease cleavage. The polypeptide is RNA pyrophosphohydrolase (Bordetella pertussis (strain Tohama I / ATCC BAA-589 / NCTC 13251)).